A 78-amino-acid chain; its full sequence is Protein M6 (78 aa).

Belongs to the A9/FIL1 family. In terms of tissue distribution, tapetum of anthers.

The protein resides in the secreted. In Lilium henryi (Henry's lily), this protein is Protein M6 (M6).